A 907-amino-acid chain; its full sequence is Phosphoenolpyruvate carboxylase (907 aa).

Catalysis depends on residues His-138 and Lys-570.

The protein belongs to the PEPCase type 1 family. It depends on Mg(2+) as a cofactor.

The enzyme catalyses oxaloacetate + phosphate = phosphoenolpyruvate + hydrogencarbonate. Forms oxaloacetate, a four-carbon dicarboxylic acid source for the tricarboxylic acid cycle. This Streptococcus mutans serotype c (strain ATCC 700610 / UA159) protein is Phosphoenolpyruvate carboxylase.